A 327-amino-acid polypeptide reads, in one-letter code: tRNA uridine(34) hydroxylase (327 aa).

Positions 130 to 224 constitute a Rhodanese domain; it reads LDEDTVVLDT…YGKDPEVQGE (95 aa). The active-site Cysteine persulfide intermediate is the Cys184.

It belongs to the TrhO family.

The enzyme catalyses uridine(34) in tRNA + AH2 + O2 = 5-hydroxyuridine(34) in tRNA + A + H2O. Its function is as follows. Catalyzes oxygen-dependent 5-hydroxyuridine (ho5U) modification at position 34 in tRNAs. This chain is tRNA uridine(34) hydroxylase, found in Streptococcus thermophilus (strain ATCC BAA-250 / LMG 18311).